The chain runs to 517 residues: Protein disulfide-isomerase A5 (517 aa).

A signal peptide spans 1 to 21; sequence MARAWGLLLAIGVVLPTWLSS. Intrachain disulfides connect cysteine 83–cysteine 92, cysteine 180–cysteine 183, cysteine 303–cysteine 306, and cysteine 424–cysteine 427. 3 Thioredoxin domains span residues 132–259, 268–382, and 376–504; these read FLKD…NPLP, PWAD…NPEA, and WMQN…TLRE. The Prevents secretion from ER motif lies at 514–517; it reads REEL.

It belongs to the protein disulfide isomerase family. Interacts with CALR (via P-domain).

The protein localises to the endoplasmic reticulum lumen. The catalysed reaction is Catalyzes the rearrangement of -S-S- bonds in proteins.. This chain is Protein disulfide-isomerase A5 (Pdia5), found in Mus musculus (Mouse).